Consider the following 100-residue polypeptide: Large ribosomal subunit protein bL27 (100 aa).

Residues 1–9 (MLSINLSLC) constitute a propeptide that is removed on maturation.

Belongs to the bacterial ribosomal protein bL27 family. Post-translationally, the N-terminus is cleaved by ribosomal processing cysteine protease Prp.

This Clostridium acetobutylicum (strain ATCC 824 / DSM 792 / JCM 1419 / IAM 19013 / LMG 5710 / NBRC 13948 / NRRL B-527 / VKM B-1787 / 2291 / W) protein is Large ribosomal subunit protein bL27.